The chain runs to 107 residues: Large ribosomal subunit protein uL24 (107 aa).

This sequence belongs to the universal ribosomal protein uL24 family. In terms of assembly, part of the 50S ribosomal subunit.

One of two assembly initiator proteins, it binds directly to the 5'-end of the 23S rRNA, where it nucleates assembly of the 50S subunit. Functionally, one of the proteins that surrounds the polypeptide exit tunnel on the outside of the subunit. This is Large ribosomal subunit protein uL24 from Kosmotoga olearia (strain ATCC BAA-1733 / DSM 21960 / TBF 19.5.1).